The sequence spans 466 residues: 3-isopropylmalate dehydratase large subunit (466 aa).

Residues Cys-347, Cys-407, and Cys-410 each coordinate [4Fe-4S] cluster.

Belongs to the aconitase/IPM isomerase family. LeuC type 1 subfamily. In terms of assembly, heterodimer of LeuC and LeuD. It depends on [4Fe-4S] cluster as a cofactor.

The catalysed reaction is (2R,3S)-3-isopropylmalate = (2S)-2-isopropylmalate. The protein operates within amino-acid biosynthesis; L-leucine biosynthesis; L-leucine from 3-methyl-2-oxobutanoate: step 2/4. Its function is as follows. Catalyzes the isomerization between 2-isopropylmalate and 3-isopropylmalate, via the formation of 2-isopropylmaleate. The protein is 3-isopropylmalate dehydratase large subunit of Shewanella piezotolerans (strain WP3 / JCM 13877).